We begin with the raw amino-acid sequence, 305 residues long: Ferredoxin--NADP reductase (305 aa).

FAD-binding residues include Glu-31, Tyr-42, Val-82, and Asp-274.

It belongs to the ferredoxin--NADP reductase type 2 family. In terms of assembly, homodimer. Requires FAD as cofactor.

The enzyme catalyses 2 reduced [2Fe-2S]-[ferredoxin] + NADP(+) + H(+) = 2 oxidized [2Fe-2S]-[ferredoxin] + NADPH. The protein is Ferredoxin--NADP reductase of Ignicoccus hospitalis (strain KIN4/I / DSM 18386 / JCM 14125).